Here is a 554-residue protein sequence, read N- to C-terminus: Phospholipase B-like protein E (554 aa).

The N-terminal stretch at 1-19 (MKLFILLIVIVFLISNSYS) is a signal peptide. Residues Asn-113, Asn-140, Asn-231, Asn-302, Asn-340, and Asn-546 are each glycosylated (N-linked (GlcNAc...) asparagine).

The protein belongs to the phospholipase B-like family.

The protein localises to the secreted. Functionally, probable phospholipase. In Dictyostelium discoideum (Social amoeba), this protein is Phospholipase B-like protein E (plbE).